Consider the following 415-residue polypeptide: Gamma-glutamyl phosphate reductase (415 aa).

This sequence belongs to the gamma-glutamyl phosphate reductase family.

It localises to the cytoplasm. It carries out the reaction L-glutamate 5-semialdehyde + phosphate + NADP(+) = L-glutamyl 5-phosphate + NADPH + H(+). Its pathway is amino-acid biosynthesis; L-proline biosynthesis; L-glutamate 5-semialdehyde from L-glutamate: step 2/2. Catalyzes the NADPH-dependent reduction of L-glutamate 5-phosphate into L-glutamate 5-semialdehyde and phosphate. The product spontaneously undergoes cyclization to form 1-pyrroline-5-carboxylate. This Bacillus thuringiensis subsp. konkukian (strain 97-27) protein is Gamma-glutamyl phosphate reductase.